We begin with the raw amino-acid sequence, 320 residues long: MIIMRNYKFKLESLHQNQKVFRRCTVHSTVLHIISLHEDWSTRLTYKLSLYYCKIKNCYTTFKFEKSNRSIITRAERIINVQHLRRCKDIVDNFSGLISILLVLIFCINLSGCNTSKRLAYDNKYSYKELSKDDPHNLTYIGHYKVGKNYKIKGKIYKPYTPKYFTETGYASWYGGRKDGFHGKKTANGDRFNRNLLTAAHKTLPLPCLVKVTNKANNKSVILMVNDRGPFKKNRIIDVSQKAAEILAFKNQGITKVRIEYLPNETEKFLKKINLKKTENKIFANNYKESLFTKVTKNNQCSINCHIKLVNLKYKLAVNP.

The protein belongs to the RlpA family.

In terms of biological role, lytic transglycosylase with a strong preference for naked glycan strands that lack stem peptides. The sequence is that of Endolytic peptidoglycan transglycosylase RlpA from Rickettsia typhi (strain ATCC VR-144 / Wilmington).